The primary structure comprises 175 residues: NADH-quinone oxidoreductase subunit I (175 aa).

2 4Fe-4S ferredoxin-type domains span residues L44–A74 and R90–D119. C54, C57, C60, C64, C99, C102, C105, and C109 together coordinate [4Fe-4S] cluster. The interval P148–R175 is disordered.

Belongs to the complex I 23 kDa subunit family. As to quaternary structure, NDH-1 is composed of 14 different subunits. Subunits NuoA, H, J, K, L, M, N constitute the membrane sector of the complex. [4Fe-4S] cluster serves as cofactor.

Its subcellular location is the cell membrane. It catalyses the reaction a quinone + NADH + 5 H(+)(in) = a quinol + NAD(+) + 4 H(+)(out). Its function is as follows. NDH-1 shuttles electrons from NADH, via FMN and iron-sulfur (Fe-S) centers, to quinones in the respiratory chain. The immediate electron acceptor for the enzyme in this species is believed to be menaquinone. Couples the redox reaction to proton translocation (for every two electrons transferred, four hydrogen ions are translocated across the cytoplasmic membrane), and thus conserves the redox energy in a proton gradient. The chain is NADH-quinone oxidoreductase subunit I from Mycolicibacterium gilvum (strain PYR-GCK) (Mycobacterium gilvum (strain PYR-GCK)).